A 697-amino-acid chain; its full sequence is Histone deacetylase HOS3 (697 aa).

Residues 40–440 (AKAVVVLSPY…LIGLQNQDWV (401 aa)) form a histone deacetylase region. Histidine 196 is an active-site residue. Residues 525–573 (IRSHRSNASPEKELHENKPRSTEKQEQREIRSDTKVKQLSSNNRAAETQ) are disordered. Positions 534 to 560 (PEKELHENKPRSTEKQEQREIRSDTKV) are enriched in basic and acidic residues. The span at 561–573 (KQLSSNNRAAETQ) shows a compositional bias: polar residues. Serine 582, serine 583, serine 613, and serine 629 each carry phosphoserine. Residues 625–638 (GDEDSDHELKEKNW) show a composition bias toward basic and acidic residues. The disordered stretch occupies residues 625 to 697 (GDEDSDHELK…KHTTRSGGRW (73 aa)). Over residues 665-674 (QPQNANTPTY) the composition is skewed to polar residues.

This sequence belongs to the histone deacetylase family. HD type 1 subfamily. Homodimer.

It localises to the nucleus. The catalysed reaction is N(6)-acetyl-L-lysyl-[histone] + H2O = L-lysyl-[histone] + acetate. In terms of biological role, responsible for the deacetylation of lysine residues on the N-terminal part of the core histones (H2A, H2B, H3 and H4). Histone deacetylation gives a tag for epigenetic repression and plays an important role in transcriptional regulation, cell cycle progression and developmental events. Histone deacetylases act via the formation of large multiprotein complexes. This is Histone deacetylase HOS3 (HOS3) from Saccharomyces cerevisiae (strain ATCC 204508 / S288c) (Baker's yeast).